Reading from the N-terminus, the 147-residue chain is Hemoglobin subunit gamma-2 (147 aa).

Positions 3–147 (HFTEEDKATI…VASALSSRYH (145 aa)) constitute a Globin domain. Thr-13 is subject to Phosphothreonine. A phosphoserine mark is found at Ser-45, Ser-51, and Ser-53. At Lys-60 the chain carries N6-acetyllysine. A heme b-binding site is contributed by His-64. Residue Lys-83 is modified to N6-acetyllysine. His-93 contributes to the heme b binding site. An S-nitrosocysteine modification is found at Cys-94. A phosphoserine mark is found at Ser-140, Ser-143, and Ser-144.

It belongs to the globin family. In terms of assembly, heterotetramer of two alpha chains and two gamma chains in fetal hemoglobin (Hb F). As to expression, red blood cells.

Gamma chains make up the fetal hemoglobin F, in combination with alpha chains. In Gorilla gorilla gorilla (Western lowland gorilla), this protein is Hemoglobin subunit gamma-2 (HBG2).